The following is a 570-amino-acid chain: Nucleoprotein (570 aa).

The interval 54 to 241 (MRKDKRNDSD…IDVSKSSINV (188 aa)) is binding site for the cap structure m7GTP. The interval 342–361 (IDLSQNKQMSPAKPKGAGHG) is disordered. Mn(2+) is bound by residues D390 and E392. Zn(2+)-binding residues include E400, C507, H510, and C530. D534 is a binding site for Mn(2+).

This sequence belongs to the arenaviridae nucleocapsid protein family. In terms of assembly, homomultimerizes to form the nucleocapsid. Binds to viral genomic RNA. Interacts with glycoprotein G2. Interacts with protein Z; this interaction probably directs the encapsidated genome to budding sites. Interacts with protein L; this interaction does not interfere with Z-L interaction. Interacts with host IKBKE (via Protein kinase domain); the interaction inhibits IKBKE kinase activity.

Its subcellular location is the virion. It is found in the host cytoplasm. Its function is as follows. Encapsidates the genome, protecting it from nucleases. The encapsidated genomic RNA is termed the nucleocapsid (NC). Serves as template for viral transcription and replication. The increased presence of protein N in host cell does not seem to trigger the switch from transcription to replication as observed in other negative strain RNA viruses. Through the interaction with host IKBKE, strongly inhibits the phosphorylation and nuclear translocation of host IRF3, a protein involved in interferon activation pathway, leading to the inhibition of interferon-beta and IRF3-dependent promoters activation. Also encodes a functional 3'-5' exoribonuclease that degrades preferentially dsRNA substrates and thereby participates in the suppression of interferon induction. The polypeptide is Nucleoprotein (Praomys (African soft-furred rats)).